The following is a 378-amino-acid chain: Apolipoprotein A-IV (378 aa).

The N-terminal stretch at 1–20 (MFLKAVVLTLSLVAITGARA) is a signal peptide. Repeat copies occupy residues 33–54 (DYFS…QSEL), 60–81 (SVTK…RNSW), 82–98 (EHSR…RQVG), 110–130 (PNCD…QAVG), 131–152 (PYAE…NQLT), 153–174 (SHAQ…SSLT), 175–196 (PFAD…GHLT), 197–218 (PYTD…RSLA), 219–240 (PYAQ…FQMK), 241–262 (KNAE…QRLA), 263–280 (PVAE…AGLH), 281–302 (KSLA…RNVG), and 303–324 (PYGE…QKLG). The 13 X 22 AA approximate tandem repeats stretch occupies residues 33–324 (DYFSQLSNNA…QVEELRQKLG (292 aa)). The interval 354–378 (EKESQDTPVALPKQEQEQSAVPLES) is disordered.

The protein belongs to the apolipoprotein A1/A4/E family. As to quaternary structure, homodimer.

It localises to the secreted. Its function is as follows. May have a role in chylomicrons and VLDL secretion and catabolism. Required for efficient activation of lipoprotein lipase by ApoC-II; potent activator of LCAT. Apoa-IV is a major component of HDL and chylomicrons. This Canis lupus familiaris (Dog) protein is Apolipoprotein A-IV.